We begin with the raw amino-acid sequence, 254 residues long: Phosphoribosylaminoimidazole-succinocarboxamide synthase (254 aa).

The protein belongs to the SAICAR synthetase family.

It catalyses the reaction 5-amino-1-(5-phospho-D-ribosyl)imidazole-4-carboxylate + L-aspartate + ATP = (2S)-2-[5-amino-1-(5-phospho-beta-D-ribosyl)imidazole-4-carboxamido]succinate + ADP + phosphate + 2 H(+). It participates in purine metabolism; IMP biosynthesis via de novo pathway; 5-amino-1-(5-phospho-D-ribosyl)imidazole-4-carboxamide from 5-amino-1-(5-phospho-D-ribosyl)imidazole-4-carboxylate: step 1/2. The chain is Phosphoribosylaminoimidazole-succinocarboxamide synthase from Brucella anthropi (strain ATCC 49188 / DSM 6882 / CCUG 24695 / JCM 21032 / LMG 3331 / NBRC 15819 / NCTC 12168 / Alc 37) (Ochrobactrum anthropi).